We begin with the raw amino-acid sequence, 254 residues long: SLA class II histocompatibility antigen, DQ haplotype C alpha chain (254 aa).

A signal peptide spans M1–G23. Residues E24–K120 form an alpha-1 region. Residues E24 to E216 are Extracellular-facing. N104 and N144 each carry an N-linked (GlcNAc...) asparagine glycan. One can recognise an Ig-like C1-type domain in the interval P113–E204. The segment at S121–W203 is alpha-2. C133 and C188 are joined by a disulfide. The tract at residues E204–E216 is connecting peptide. The helical transmembrane segment at T217–I239 threads the bilayer. Topologically, residues Q240–L254 are cytoplasmic.

The protein belongs to the MHC class II family.

It is found in the membrane. The chain is SLA class II histocompatibility antigen, DQ haplotype C alpha chain from Sus scrofa (Pig).